The following is a 180-amino-acid chain: MILHKCGLPYFASETEKLIKHLKTSHKVKLGPQKLKKCIIVFKDAVLDTITGRVEEFSPDRFCNAKLPYNIGISQLEDIPCPDIPGDLCPTFTEFLDSFTGGKDDLKKFIRAYFNHLLRSDNLSQRFLYMMGPTGTGKSVFSLVSEVLVGSINTCHTTLARMNQPLGFNLIQFKEDVNCC.

It localises to the mitochondrion. This is an uncharacterized protein from Marchantia polymorpha (Common liverwort).